The chain runs to 478 residues: MSVELWQQCVELLRDELPAQQFNTWIRPLQVEADGDELRVYAPNRFVLDWVNEKYLGRLLELLGERSEDVTPSVSLLIGSKRSSAPRAVQPASPPPAVVQAAPVAIEEASAARTVDAQPVAPATVRTERSVQVEGGLKHTSYLNRAFTFENFVEGKSNQLARAAAWQVADNPKHGYNPLFLYGGVGLGKTHLMHAVGNHLLKKNPNAKVVYLHSERFVADMVKALQLNAINEFKRFYRSVDALLIDDIQFFAKKERSQEEFFHTFNALLEGGQQVILTSDRYPKEIEGLEERLKSRFGWGLTVAVEPPELETRVAILMKKAEQTKVELPHDAAFFIAQRIRSNVRELEGALKRVIAHSHFTNHPITIELIRESLKDLLALQDKLVSIDNIQRTVAEYYKIKIADLLSKRRSRSVARPRQVAMALSKELTNHSLPEIGDSFGGRDHTTVLHACRKIAELRETDADIREDYKNLLRTLTT.

Positions 1-90 (MSVELWQQCV…KRSSAPRAVQ (90 aa)) are domain I, interacts with DnaA modulators. The interval 91-141 (PASPPPAVVQAAPVAIEEASAARTVDAQPVAPATVRTERSVQVEGGLKHTS) is domain II. Positions 142–358 (YLNRAFTFEN…GALKRVIAHS (217 aa)) are domain III, AAA+ region. ATP contacts are provided by glycine 186, glycine 188, lysine 189, and threonine 190. The interval 359 to 478 (HFTNHPITIE…YKNLLRTLTT (120 aa)) is domain IV, binds dsDNA.

It belongs to the DnaA family. As to quaternary structure, oligomerizes as a right-handed, spiral filament on DNA at oriC.

It is found in the cytoplasm. Functionally, plays an essential role in the initiation and regulation of chromosomal replication. ATP-DnaA binds to the origin of replication (oriC) to initiate formation of the DNA replication initiation complex once per cell cycle. Binds the DnaA box (a 9 base pair repeat at the origin) and separates the double-stranded (ds)DNA. Forms a right-handed helical filament on oriC DNA; dsDNA binds to the exterior of the filament while single-stranded (ss)DNA is stabiized in the filament's interior. The ATP-DnaA-oriC complex binds and stabilizes one strand of the AT-rich DNA unwinding element (DUE), permitting loading of DNA polymerase. After initiation quickly degrades to an ADP-DnaA complex that is not apt for DNA replication. Binds acidic phospholipids. The chain is Chromosomal replication initiator protein DnaA from Azotobacter vinelandii (strain DJ / ATCC BAA-1303).